Here is a 545-residue protein sequence, read N- to C-terminus: CTP synthase (545 aa).

Positions 1 to 266 (MTTKYIFVTG…DSYFTERFGL (266 aa)) are amidoligase domain. S14 is a CTP binding site. S14 contacts UTP. ATP is bound by residues 15 to 20 (SLGKGI) and D72. Mg(2+) is bound by residues D72 and E140. CTP contacts are provided by residues 147–149 (DIE), 187–192 (KTKPTQ), and K223. UTP-binding positions include 187 to 192 (KTKPTQ) and K223. ATP is bound at residue 239-241 (KDV). Positions 291–542 (TIGMVGKYVS…VKAAGEYQKR (252 aa)) constitute a Glutamine amidotransferase type-1 domain. G352 contacts L-glutamine. C379 functions as the Nucleophile; for glutamine hydrolysis in the catalytic mechanism. L-glutamine contacts are provided by residues 380–383 (LGMQ), E403, and R470. Residues H515 and E517 contribute to the active site.

This sequence belongs to the CTP synthase family. Homotetramer.

The catalysed reaction is UTP + L-glutamine + ATP + H2O = CTP + L-glutamate + ADP + phosphate + 2 H(+). It carries out the reaction L-glutamine + H2O = L-glutamate + NH4(+). The enzyme catalyses UTP + NH4(+) + ATP = CTP + ADP + phosphate + 2 H(+). The protein operates within pyrimidine metabolism; CTP biosynthesis via de novo pathway; CTP from UDP: step 2/2. With respect to regulation, allosterically activated by GTP, when glutamine is the substrate; GTP has no effect on the reaction when ammonia is the substrate. The allosteric effector GTP functions by stabilizing the protein conformation that binds the tetrahedral intermediate(s) formed during glutamine hydrolysis. Inhibited by the product CTP, via allosteric rather than competitive inhibition. Catalyzes the ATP-dependent amination of UTP to CTP with either L-glutamine or ammonia as the source of nitrogen. Regulates intracellular CTP levels through interactions with the four ribonucleotide triphosphates. This chain is CTP synthase, found in Aeromonas hydrophila subsp. hydrophila (strain ATCC 7966 / DSM 30187 / BCRC 13018 / CCUG 14551 / JCM 1027 / KCTC 2358 / NCIMB 9240 / NCTC 8049).